Consider the following 118-residue polypeptide: Large ribosomal subunit protein bL20 (118 aa).

It belongs to the bacterial ribosomal protein bL20 family.

Binds directly to 23S ribosomal RNA and is necessary for the in vitro assembly process of the 50S ribosomal subunit. It is not involved in the protein synthesizing functions of that subunit. In Francisella tularensis subsp. tularensis (strain FSC 198), this protein is Large ribosomal subunit protein bL20.